The chain runs to 618 residues: Elongation factor 4 (618 aa).

The tr-type G domain maps to 17-198; the sequence is AIIRNFCIIA…KIVRDLPAPE (182 aa). GTP-binding positions include 29-34 and 145-148; these read DHGKST and NKID.

Belongs to the TRAFAC class translation factor GTPase superfamily. Classic translation factor GTPase family. LepA subfamily.

Its subcellular location is the cell membrane. It carries out the reaction GTP + H2O = GDP + phosphate + H(+). In terms of biological role, required for accurate and efficient protein synthesis under certain stress conditions. May act as a fidelity factor of the translation reaction, by catalyzing a one-codon backward translocation of tRNAs on improperly translocated ribosomes. Back-translocation proceeds from a post-translocation (POST) complex to a pre-translocation (PRE) complex, thus giving elongation factor G a second chance to translocate the tRNAs correctly. Binds to ribosomes in a GTP-dependent manner. The sequence is that of Elongation factor 4 from Pseudarthrobacter chlorophenolicus (strain ATCC 700700 / DSM 12829 / CIP 107037 / JCM 12360 / KCTC 9906 / NCIMB 13794 / A6) (Arthrobacter chlorophenolicus).